We begin with the raw amino-acid sequence, 252 residues long: Ribosomal RNA small subunit methyltransferase J (252 aa).

S-adenosyl-L-methionine contacts are provided by residues 101–102, 117–118, 153–154, and D171; these read RD, ER, and SS.

It belongs to the methyltransferase superfamily. RsmJ family.

Its subcellular location is the cytoplasm. The enzyme catalyses guanosine(1516) in 16S rRNA + S-adenosyl-L-methionine = N(2)-methylguanosine(1516) in 16S rRNA + S-adenosyl-L-homocysteine + H(+). Specifically methylates the guanosine in position 1516 of 16S rRNA. This Salmonella paratyphi B (strain ATCC BAA-1250 / SPB7) protein is Ribosomal RNA small subunit methyltransferase J.